The primary structure comprises 648 residues: DNA mismatch repair protein MutL (648 aa).

The tract at residues 336–443 (ERPFEPSSPQ…SGSAGESRAR (108 aa)) is disordered. Positions 370–381 (SPESKTHSTWNE) are enriched in polar residues. The segment covering 383–410 (SRVDTSRAETSRESRIDSPLGERTRDIA) has biased composition (basic and acidic residues).

The protein belongs to the DNA mismatch repair MutL/HexB family.

Its function is as follows. This protein is involved in the repair of mismatches in DNA. It is required for dam-dependent methyl-directed DNA mismatch repair. May act as a 'molecular matchmaker', a protein that promotes the formation of a stable complex between two or more DNA-binding proteins in an ATP-dependent manner without itself being part of a final effector complex. The protein is DNA mismatch repair protein MutL of Shewanella sp. (strain ANA-3).